Here is a 118-residue protein sequence, read N- to C-terminus: Non-specific lipid-transfer protein-like 1 (118 aa).

The 109-residue stretch at 5–113 (SDVIFEEIKE…KLRTILDPKM (109 aa)) folds into the SCP2 domain.

The chain is Non-specific lipid-transfer protein-like 1 (nlt-1) from Caenorhabditis elegans.